Here is a 599-residue protein sequence, read N- to C-terminus: UvrABC system protein C (599 aa).

The GIY-YIG domain occupies 13–91; it reads NLPGVYRMIN…IKGFMPRYNV (79 aa). One can recognise a UVR domain in the interval 200–235; sequence QQVMDELGEKMNEAAEKMEYELAAVYRDRIQSLRQV.

The protein belongs to the UvrC family. In terms of assembly, interacts with UvrB in an incision complex.

It localises to the cytoplasm. Functionally, the UvrABC repair system catalyzes the recognition and processing of DNA lesions. UvrC both incises the 5' and 3' sides of the lesion. The N-terminal half is responsible for the 3' incision and the C-terminal half is responsible for the 5' incision. In Methylobacillus flagellatus (strain ATCC 51484 / DSM 6875 / VKM B-1610 / KT), this protein is UvrABC system protein C.